The following is a 251-amino-acid chain: uncharacterized protein (251 aa).

To Anabaena PCC 7120 alr2406.

This is an uncharacterized protein from Synechocystis sp. (strain ATCC 27184 / PCC 6803 / Kazusa).